A 97-amino-acid polypeptide reads, in one-letter code: Plastocyanin A/B (97 aa).

In terms of domain architecture, Plastocyanin-like spans 1–97 (AEVKLGSDDG…AGMKGEVTVN (97 aa)). The Cu cation site is built by His-37, Cys-82, His-85, and Met-90.

Belongs to the plastocyanin family. Cu(2+) serves as cofactor.

It is found in the plastid. The protein resides in the chloroplast thylakoid membrane. Its function is as follows. Participates in electron transfer between P700 and the cytochrome b6-f complex in photosystem I. The protein is Plastocyanin A/B (PETE) of Petroselinum crispum (Parsley).